A 304-amino-acid chain; its full sequence is DCN1-like protein 3 (304 aa).

Disordered stretches follow at residues 1-87 (MGQC…EESS) and 285-304 (VEGR…EEQT). Glycine 2 is lipidated: N-myristoyl glycine. The 193-residue stretch at 86–278 (SSLQRLEELF…LFDTFVEWEM (193 aa)) folds into the DCUN1 domain.

In terms of assembly, part of a complex containing DCUN1D3, CUL3 and RBX1. Interacts (via the DCUN1 domain) with the unneddylated cullins: interacts with CUL1, CUL2, CUL3, CUL4A, CUL4B and CUL5; these interactions promote the cullin neddylation and the identity of the cullin dictates the affinity of the interaction. Interacts preferentially with CUL3; this interaction triggers the relocalization of CUL3 to the cell membrane where CUL3 is neddylated. Interacts (via DCUN1 domain) with RBX1. May also interact with regulators or subunits of cullin-RING ligases such as RNF7, ELOB and DDB1; these interactions are bridged by cullins. Interacts (via DCUN1 domain) with CAND1; this interaction is bridged by cullins and strongly inhibits cullin neddylation. These CAND-cullin-DCNL complexes can only be neddylated in the presence of a substrate adapter. Interacts (via DCUN1 domain) with the N-terminally acetylated form of UBE2M and UBE2F.

It is found in the cell membrane. The protein resides in the cytoplasm. It localises to the nucleus. Its subcellular location is the perinuclear region. Functionally, contributes to the neddylation of all cullins by transferring NEDD8 from N-terminally acetylated NEDD8-conjugating E2s enzyme to different cullin C-terminal domain-RBX complexes and may play a role in the cell cycle progression by regulating the SCF ubiquitin E3 ligase complex, after UV damage. At the cell membrane, can promote and as well inhibit cullins neddylation. The protein is DCN1-like protein 3 of Rattus norvegicus (Rat).